A 512-amino-acid polypeptide reads, in one-letter code: Maturase K (512 aa).

This sequence belongs to the intron maturase 2 family. MatK subfamily.

The protein resides in the plastid. It is found in the chloroplast. Its function is as follows. Usually encoded in the trnK tRNA gene intron. Probably assists in splicing its own and other chloroplast group II introns. This is Maturase K from Filarum manserichense.